The primary structure comprises 513 residues: ATP synthase subunit alpha (513 aa).

An ATP-binding site is contributed by 169–176 (GDRQTGKT).

The protein belongs to the ATPase alpha/beta chains family. F-type ATPases have 2 components, CF(1) - the catalytic core - and CF(0) - the membrane proton channel. CF(1) has five subunits: alpha(3), beta(3), gamma(1), delta(1), epsilon(1). CF(0) has three main subunits: a(1), b(2) and c(9-12). The alpha and beta chains form an alternating ring which encloses part of the gamma chain. CF(1) is attached to CF(0) by a central stalk formed by the gamma and epsilon chains, while a peripheral stalk is formed by the delta and b chains.

It localises to the cell inner membrane. It catalyses the reaction ATP + H2O + 4 H(+)(in) = ADP + phosphate + 5 H(+)(out). Functionally, produces ATP from ADP in the presence of a proton gradient across the membrane. The alpha chain is a regulatory subunit. The protein is ATP synthase subunit alpha of Bordetella pertussis (strain Tohama I / ATCC BAA-589 / NCTC 13251).